Here is a 107-residue protein sequence, read N- to C-terminus: ATP-dependent Clp protease adapter protein ClpS (107 aa).

Positions 1-20 are disordered; that stretch reads MAQKHEHDTSVITESAPKQK.

The protein belongs to the ClpS family. As to quaternary structure, binds to the N-terminal domain of the chaperone ClpA.

In terms of biological role, involved in the modulation of the specificity of the ClpAP-mediated ATP-dependent protein degradation. This chain is ATP-dependent Clp protease adapter protein ClpS, found in Myxococcus xanthus (strain DK1622).